The following is a 217-amino-acid chain: Probable transaldolase (217 aa).

Residue Lys83 is the Schiff-base intermediate with substrate of the active site.

Belongs to the transaldolase family. Type 3B subfamily.

The protein localises to the cytoplasm. It catalyses the reaction D-sedoheptulose 7-phosphate + D-glyceraldehyde 3-phosphate = D-erythrose 4-phosphate + beta-D-fructose 6-phosphate. It functions in the pathway carbohydrate degradation; pentose phosphate pathway; D-glyceraldehyde 3-phosphate and beta-D-fructose 6-phosphate from D-ribose 5-phosphate and D-xylulose 5-phosphate (non-oxidative stage): step 2/3. In terms of biological role, transaldolase is important for the balance of metabolites in the pentose-phosphate pathway. This is Probable transaldolase from Caldicellulosiruptor saccharolyticus (strain ATCC 43494 / DSM 8903 / Tp8T 6331).